An 829-amino-acid polypeptide reads, in one-letter code: Leucine--tRNA ligase (829 aa).

The 'HIGH' region signature appears at 40–50; the sequence is PYPSGNIHMGH. Positions 581–585 match the 'KMSKS' region motif; sequence KMSKS. Lysine 584 contributes to the ATP binding site.

Belongs to the class-I aminoacyl-tRNA synthetase family.

The protein resides in the cytoplasm. The catalysed reaction is tRNA(Leu) + L-leucine + ATP = L-leucyl-tRNA(Leu) + AMP + diphosphate. This chain is Leucine--tRNA ligase, found in Nitratidesulfovibrio vulgaris (strain DP4) (Desulfovibrio vulgaris).